Reading from the N-terminus, the 202-residue chain is ATP-dependent Clp protease proteolytic subunit (202 aa).

Ser-106 (nucleophile) is an active-site residue. His-131 is a catalytic residue.

The protein belongs to the peptidase S14 family. In terms of assembly, fourteen ClpP subunits assemble into 2 heptameric rings which stack back to back to give a disk-like structure with a central cavity, resembling the structure of eukaryotic proteasomes.

The protein resides in the cytoplasm. It catalyses the reaction Hydrolysis of proteins to small peptides in the presence of ATP and magnesium. alpha-casein is the usual test substrate. In the absence of ATP, only oligopeptides shorter than five residues are hydrolyzed (such as succinyl-Leu-Tyr-|-NHMec, and Leu-Tyr-Leu-|-Tyr-Trp, in which cleavage of the -Tyr-|-Leu- and -Tyr-|-Trp bonds also occurs).. Its function is as follows. Cleaves peptides in various proteins in a process that requires ATP hydrolysis. Has a chymotrypsin-like activity. Plays a major role in the degradation of misfolded proteins. This is ATP-dependent Clp protease proteolytic subunit from Shewanella oneidensis (strain ATCC 700550 / JCM 31522 / CIP 106686 / LMG 19005 / NCIMB 14063 / MR-1).